A 353-amino-acid polypeptide reads, in one-letter code: Quinolinate synthase (353 aa).

Iminosuccinate contacts are provided by His-47 and Ser-68. Cys-113 contributes to the [4Fe-4S] cluster binding site. Iminosuccinate contacts are provided by residues 139–141 (YAN) and Ser-156. Cys-200 is a binding site for [4Fe-4S] cluster. Iminosuccinate is bound by residues 226–228 (HPE) and Thr-243. Cys-297 is a binding site for [4Fe-4S] cluster.

Belongs to the quinolinate synthase family. Type 1 subfamily. It depends on [4Fe-4S] cluster as a cofactor.

The protein resides in the cytoplasm. The catalysed reaction is iminosuccinate + dihydroxyacetone phosphate = quinolinate + phosphate + 2 H2O + H(+). It functions in the pathway cofactor biosynthesis; NAD(+) biosynthesis; quinolinate from iminoaspartate: step 1/1. Its function is as follows. Catalyzes the condensation of iminoaspartate with dihydroxyacetone phosphate to form quinolinate. The polypeptide is Quinolinate synthase (Vibrio vulnificus (strain YJ016)).